Here is a 375-residue protein sequence, read N- to C-terminus: Putative glycyl-radical enzyme activating enzyme MJ0021 (375 aa).

The region spanning 23 to 246 is the Radical SAM core domain; that stretch reads QCVKGGKLVL…LKVIKEFKGD (224 aa). 3 residues coordinate [4Fe-4S] cluster: cysteine 38, cysteine 42, and cysteine 45. Residues 44–46 and glycine 87 each bind S-adenosyl-L-methionine; that span reads YCP.

It belongs to the organic radical-activating enzymes family. The cofactor is [4Fe-4S] cluster.

The enzyme catalyses glycyl-[protein] + reduced [flavodoxin] + S-adenosyl-L-methionine = glycin-2-yl radical-[protein] + semiquinone [flavodoxin] + 5'-deoxyadenosine + L-methionine + H(+). The sequence is that of Putative glycyl-radical enzyme activating enzyme MJ0021 from Methanocaldococcus jannaschii (strain ATCC 43067 / DSM 2661 / JAL-1 / JCM 10045 / NBRC 100440) (Methanococcus jannaschii).